A 163-amino-acid chain; its full sequence is Nucleotide-binding protein NFA_51200 (163 aa).

This sequence belongs to the YajQ family.

In terms of biological role, nucleotide-binding protein. The sequence is that of Nucleotide-binding protein NFA_51200 from Nocardia farcinica (strain IFM 10152).